The following is a 354-amino-acid chain: N-acetyl-gamma-glutamyl-phosphate reductase (354 aa).

Residue cysteine 156 is part of the active site.

The protein belongs to the NAGSA dehydrogenase family. Type 1 subfamily.

The protein resides in the cytoplasm. It catalyses the reaction N-acetyl-L-glutamate 5-semialdehyde + phosphate + NADP(+) = N-acetyl-L-glutamyl 5-phosphate + NADPH + H(+). Its pathway is amino-acid biosynthesis; L-arginine biosynthesis; N(2)-acetyl-L-ornithine from L-glutamate: step 3/4. Functionally, catalyzes the NADPH-dependent reduction of N-acetyl-5-glutamyl phosphate to yield N-acetyl-L-glutamate 5-semialdehyde. The protein is N-acetyl-gamma-glutamyl-phosphate reductase of Bordetella bronchiseptica (strain ATCC BAA-588 / NCTC 13252 / RB50) (Alcaligenes bronchisepticus).